Here is a 174-residue protein sequence, read N- to C-terminus: Major allergen Can f 1 (174 aa).

An N-terminal signal peptide occupies residues 1 to 18; sequence MKTLLLTIGFSLIAILQA. A disulfide bridge links C78 with C169. Residue N80 is glycosylated (N-linked (GlcNAc...) asparagine).

The protein belongs to the calycin superfamily. Lipocalin family. Tongue epithelial tissue.

The protein localises to the secreted. The protein is Major allergen Can f 1 of Canis lupus familiaris (Dog).